A 78-amino-acid polypeptide reads, in one-letter code: MAKPVLRKPKKKSNPLKSAKIEAIDYKDTVLLRKFISDRGKIRARRVTGVSVQEQRAIAKAVKNAREMALLPYSSSAR.

It belongs to the bacterial ribosomal protein bS18 family. In terms of assembly, part of the 30S ribosomal subunit. Forms a tight heterodimer with protein bS6.

Functionally, binds as a heterodimer with protein bS6 to the central domain of the 16S rRNA, where it helps stabilize the platform of the 30S subunit. This chain is Small ribosomal subunit protein bS18, found in Beutenbergia cavernae (strain ATCC BAA-8 / DSM 12333 / CCUG 43141 / JCM 11478 / NBRC 16432 / NCIMB 13614 / HKI 0122).